Reading from the N-terminus, the 288-residue chain is Probable aquaporin PIP2-2 (288 aa).

The segment at 1–21 (MAKDIEASAPEGGEFSAKDYT) is disordered. 2 helical membrane passes run 42–62 (AVIA…ATVI) and 81–101 (GVGI…LVYC). The NPA 1 motif lies at 111–113 (NPA). 3 helical membrane-spanning segments follow: residues 130–150 (VLYI…VKGF), 172–192 (GTGL…VFSA), and 204–224 (IPVL…LATI). An NPA 2 motif is present at residues 232–234 (NPA). A helical transmembrane segment spans residues 254-274 (IFWVGPLIGAAIAAAYHQYVL).

The protein belongs to the MIP/aquaporin (TC 1.A.8) family. PIP (TC 1.A.8.11) subfamily. Expressed in roots, leaves and anthers.

The protein resides in the cell membrane. Aquaporins facilitate the transport of water and small neutral solutes across cell membranes. The chain is Probable aquaporin PIP2-2 (PIP2-2) from Oryza sativa subsp. japonica (Rice).